The primary structure comprises 198 residues: Recombination protein RecR (198 aa).

The segment at 57–72 (CSVCCNLTDQDPCQIC) adopts a C4-type zinc-finger fold. Residues 80-175 (STICVVQEPR…KVTRIARGLP (96 aa)) form the Toprim domain.

Belongs to the RecR family.

May play a role in DNA repair. It seems to be involved in an RecBC-independent recombinational process of DNA repair. It may act with RecF and RecO. The protein is Recombination protein RecR of Symbiobacterium thermophilum (strain DSM 24528 / JCM 14929 / IAM 14863 / T).